The chain runs to 90 residues: Progonadoliberin-3 (90 aa).

The first 23 residues, 1–23, serve as a signal peptide directing secretion; that stretch reads MDVSSKVVVQVLLLALVVQVTLC. At Gln24 the chain carries Pyrrolidone carboxylic acid. Gly33 is subject to Glycine amide.

The protein belongs to the GnRH family. Expressed in neuron cell bodies of the nucleus olfactoretinalis.

It is found in the secreted. Functionally, stimulates the secretion of gonadotropins. This chain is Progonadoliberin-3 (gnrh3), found in Oryzias latipes (Japanese rice fish).